The primary structure comprises 864 residues: Translation initiation factor IF-2 (864 aa).

Residues 140 to 171 are compositionally biased toward basic and acidic residues; it reads DSRSLNTKKENKLKISNKDEQNKKFNQHRESN. The interval 140–179 is disordered; that stretch reads DSRSLNTKKENKLKISNKDEQNKKFNQHRESNSFDLNHKK. The tr-type G domain occupies 364-533; the sequence is IRAPVVTIMG…LLQAEMLELK (170 aa). The tract at residues 373–380 is G1; that stretch reads GHVDHGKT. Residue 373–380 coordinates GTP; sequence GHVDHGKT. A G2 region spans residues 398–402; it reads GITQN. A G3 region spans residues 419 to 422; that stretch reads DTPG. Residues 419–423 and 473–476 contribute to the GTP site; these read DTPGH and NKID. A G4 region spans residues 473-476; that stretch reads NKID. The interval 509 to 511 is G5; the sequence is SAK.

It belongs to the TRAFAC class translation factor GTPase superfamily. Classic translation factor GTPase family. IF-2 subfamily.

The protein resides in the cytoplasm. In terms of biological role, one of the essential components for the initiation of protein synthesis. Protects formylmethionyl-tRNA from spontaneous hydrolysis and promotes its binding to the 30S ribosomal subunits. Also involved in the hydrolysis of GTP during the formation of the 70S ribosomal complex. The chain is Translation initiation factor IF-2 from Buchnera aphidicola subsp. Acyrthosiphon pisum (strain Tuc7).